The following is a 274-amino-acid chain: MTASALAYLEPDSSAELTGVYHLVLDRPEARNAISRSLLQDVLQCLQVLVCKITQPKQDEPLPRVLILRANGPCFCAGADLKERREMSEAEVIEFLQDLRHMLEQVEKLPIPTLAAIDGPALGGGLELALACDFRIAAETVSKIGFPEVKLGIIPGAGGTQRAPRIIGMQRAKELIYTGTQLNATQAKDLGLIDHVAPGSTCLKLCQELAQQMMPSAPLALRAAKMAISMGANVELARGLDLEWACYEPLLESKDRREALDAFQQKRKPIFTGK.

Substrate contacts are provided by residues 77 to 81 (AGADL) and glycine 124. Residues 79-109 (ADLKERREMSEAEVIEFLQDLRHMLEQVEKL) are a coiled coil.

Belongs to the enoyl-CoA hydratase/isomerase family.

The enzyme catalyses a (3S)-3-hydroxyacyl-CoA = a (2E)-enoyl-CoA + H2O. It catalyses the reaction a 4-saturated-(3S)-3-hydroxyacyl-CoA = a (3E)-enoyl-CoA + H2O. Its pathway is siderophore biosynthesis. Functionally, enoyl-CoA isomerase/hydratase; part of the gene cluster that mediates the biosynthesis of siderophore ferrichrome A which is contributing to organismal virulence. The first step of ferrichrome A biosynthesis is performed by the HMG-CoA synthase hcs1 which catalyzes the generation of HMG-CoA and CoA using acetoacetyl-CoA and acetyl-CoA as substrates. The enoyl-CoA isomerase/hydratase fer4 then catalyzes the conversion of hcs1-produced HMG-CoA to methylglutaconyl-CoA. The acyltransferase fer5 then fuses the fer4-generated methylglutaconyl-CoA with sid1-generated hydroxyornithine to yield methylglutaconyl hydroxyornithine. Methylglutaconyl hydroxyornithine is then available for use by the NRPS fer3 to generate ferrichrome A. This Mycosarcoma maydis (Corn smut fungus) protein is Enoyl-CoA isomerase/hydratase fer4.